The primary structure comprises 98 residues: Putative zinc finger protein ORF98b (98 aa).

A C2H2-type zinc finger spans residues 54-77 (GFCPYCHNHYRTFGILANHIMRSH).

The sequence is that of Putative zinc finger protein ORF98b from Acidianus convivator (ATV).